The following is a 428-amino-acid chain: MKLITNKQGLVGAITVPGDKSMSHRSIMFGAIAEGKTVIRHFLRADDCLGTIKAFKALGVKIEETDEEIIVHGTGFDGLKQADGPLDIGNSGTTIRLMMGILAGRDFDTVILGDESIAKRPMNRVMLPLQQMGAKMHGKDGSEFAPITITGKQSLKRMEYHMPVASAQVKSAIIFAALQAEGETIIHEKEKTRDHTEHMIRQFGGEIEMDGLTIRVKGGQKFTGQEMTVPGDVSSAAFFIVAGLITPGSEIELTHVGLNPTRTGIFDVVKQMGGSLVVKDSSRSTGKLAGTVVVKTSKLKGTEIDGDIIPRLIDEIPVIALLATQAEGTTIIKDAAELKVKETNRIDAVATELNKMGADITPTEDGLIIHGKTPLHAANVTSYGDHRIGMMLQIAALLVEEGDVELERPEAVSVSYPTFFEDIRSLLK.

3-phosphoshikimate-binding residues include K20, S21, and R25. K20 serves as a coordination point for phosphoenolpyruvate. Residues G92 and R120 each contribute to the phosphoenolpyruvate site. Residues S166, Q168, D314, and K341 each contribute to the 3-phosphoshikimate site. Q168 is a phosphoenolpyruvate binding site. D314 (proton acceptor) is an active-site residue. Phosphoenolpyruvate is bound by residues R345 and R387.

This sequence belongs to the EPSP synthase family. In terms of assembly, monomer.

The protein localises to the cytoplasm. It carries out the reaction 3-phosphoshikimate + phosphoenolpyruvate = 5-O-(1-carboxyvinyl)-3-phosphoshikimate + phosphate. The protein operates within metabolic intermediate biosynthesis; chorismate biosynthesis; chorismate from D-erythrose 4-phosphate and phosphoenolpyruvate: step 6/7. Its function is as follows. Catalyzes the transfer of the enolpyruvyl moiety of phosphoenolpyruvate (PEP) to the 5-hydroxyl of shikimate-3-phosphate (S3P) to produce enolpyruvyl shikimate-3-phosphate and inorganic phosphate. The polypeptide is 3-phosphoshikimate 1-carboxyvinyltransferase (Listeria monocytogenes serovar 1/2a (strain ATCC BAA-679 / EGD-e)).